The following is a 762-amino-acid chain: Probable inorganic carbon transporter subunit DabA (762 aa).

4 residues coordinate Zn(2+): cysteine 279, aspartate 281, histidine 461, and cysteine 476.

It belongs to the inorganic carbon transporter (TC 9.A.2) DabA family. In terms of assembly, forms a complex with DabB. It depends on Zn(2+) as a cofactor.

It localises to the cell inner membrane. Its function is as follows. Part of an energy-coupled inorganic carbon pump. The sequence is that of Probable inorganic carbon transporter subunit DabA from Legionella pneumophila (strain Lens).